The sequence spans 158 residues: Naphthalene 1,2-dioxygenase system, small oxygenase component (158 aa).

It belongs to the bacterial ring-hydroxylating dioxygenase beta subunit family. As to quaternary structure, the naphthalene dioxygenase (NDO) multicomponent enzyme system is composed of an electron transfer component and a dioxygenase component (iron sulfur protein (ISP)). The electron transfer component is composed of a ferredoxin reductase (NdoR) and a ferredoxin (NdoA), and the dioxygenase component is formed of a heterohexamer (trimer of heterodimers) of three large alpha subunits (NdoB) and three small beta subunits (NdoC).

The protein operates within aromatic compound metabolism; naphthalene degradation. Functionally, component of the naphthalene dioxygenase (NDO) multicomponent enzyme system which catalyzes the incorporation of both atoms of molecular oxygen into naphthalene to form cis-(1R,2S)-dihydroxy-1,2-dihydronaphthalene. The beta subunit seems to have a structural role in the holoenzyme. The polypeptide is Naphthalene 1,2-dioxygenase system, small oxygenase component (Pseudomonas fluorescens).